Consider the following 346-residue polypeptide: fMet-Leu-Phe receptor (346 aa).

2 N-linked (GlcNAc...) asparagine glycosylation sites follow: N1 and N7. The Extracellular segment spans residues 1–24; the sequence is NSSLPTNISGGTPAVSAGYLFLDI. The chain crosses the membrane as a helical span at residues 25-47; the sequence is VTYLVFAVTFVLGVLGNGLVIWV. The Cytoplasmic portion of the chain corresponds to 48 to 58; sequence AGFRMTHTVTT. Residues 59–80 traverse the membrane as a helical segment; it reads ISYLNLAVADFCFTSTLPFFMV. Over 81–97 the chain is Extracellular; sequence KKAMGGHWPFGWFLCKF. Cysteines 95 and 173 form a disulfide. A helical membrane pass occupies residues 98–118; the sequence is IFTIVDINLFGSVFLIALIAL. At 119–137 the chain is on the cytoplasmic side; the sequence is DRCVCVLHPVWTQNHRTVS. Residues 138 to 159 form a helical membrane-spanning segment; it reads LAKKVIIGPWVMALLLTLPVII. Over 160-202 the chain is Extracellular; it reads RVTTVPGKMGTVACTFNFSPWTNDPKERIKVAVAMLTVRGIIR. The helical transmembrane segment at 203–223 threads the bilayer; sequence FIIGFSAPMSIVAVSYGLIAT. Residues 224–239 lie on the Cytoplasmic side of the membrane; sequence KIDKQGLIKSSRTLRV. The chain crosses the membrane as a helical span at residues 240–263; it reads LSFVAAAFFLSWSPYQVVALIATV. Residues 264-282 lie on the Extracellular side of the membrane; the sequence is RIRELLQGMYKEIGIAVDV. The helical transmembrane segment at 283-302 threads the bilayer; it reads TSALAFFNSCLNPMLYVFMG. Over 303–346 the chain is Cytoplasmic; it reads QDFRERLIHALPASLERALTEDSTQTSDTATNSTLPSAEVALQA. The segment at 322–346 is disordered; the sequence is TEDSTQTSDTATNSTLPSAEVALQA. Residues 323-338 are compositionally biased toward polar residues; sequence EDSTQTSDTATNSTLP.

Belongs to the G-protein coupled receptor 1 family. In terms of processing, phosphorylated; which is necessary for desensitization.

The protein resides in the cell membrane. In terms of biological role, high affinity receptor for N-formyl-methionyl peptides (fMLP), which are powerful neutrophil chemotactic factors. Binding of fMLP to the receptor stimulates intracellular calcium mobilization and superoxide anion release. This response is mediated via a G-protein that activates a phosphatidylinositol-calcium second messenger system. Receptor for TAFA4, mediates its effects on chemoattracting macrophages, promoting phagocytosis and increasing ROS release. Receptor for cathepsin CTSG, leading to increased phagocyte chemotaxis. The protein is fMet-Leu-Phe receptor (FPR1) of Gorilla gorilla gorilla (Western lowland gorilla).